A 209-amino-acid polypeptide reads, in one-letter code: Mitochondrial import inner membrane translocase subunit Tim23 (209 aa).

A run of 3 helical transmembrane segments spans residues 73–93 (FELA…FGAL), 125–145 (ALWA…GVII), and 181–197 (GLAG…YNNW).

This sequence belongs to the Tim17/Tim22/Tim23 family. Component of the TIM23 complex at least composed of TIMM23, TIMM17 (TIMM17A or TIMM17B) and TIMM50; within this complex, directly interacts with TIMM50. The complex interacts with the TIMM44 component of the PAM complex and with DNAJC15. Upon mitochondrial depolarization, interacts with PINK1; the interaction is required for PINK1 accumulation at the outer mitochondrial membrane, kinase activation by autophosphorylation and PRKN recruitement to mitochondria.

Its subcellular location is the mitochondrion inner membrane. Essential component of the TIM23 complex, a complex that mediates the translocation of transit peptide-containing proteins across the mitochondrial inner membrane. Has a role in the activation of stress-induced mitophagy by protecting PINK1 from OMA1-mediated degradation and facilitating its accumulation at the outer mitochondrial membrane in response to depolarization. The sequence is that of Mitochondrial import inner membrane translocase subunit Tim23 (Timm23) from Rattus norvegicus (Rat).